The sequence spans 127 residues: Aspartate 1-decarboxylase (127 aa).

Ser25 acts as the Schiff-base intermediate with substrate; via pyruvic acid in catalysis. A Pyruvic acid (Ser) modification is found at Ser25. Thr57 is a substrate binding site. Tyr58 (proton donor) is an active-site residue. 73–75 (GAA) is a substrate binding site.

The protein belongs to the PanD family. Heterooctamer of four alpha and four beta subunits. The cofactor is pyruvate. Post-translationally, is synthesized initially as an inactive proenzyme, which is activated by self-cleavage at a specific serine bond to produce a beta-subunit with a hydroxyl group at its C-terminus and an alpha-subunit with a pyruvoyl group at its N-terminus.

The protein resides in the cytoplasm. The catalysed reaction is L-aspartate + H(+) = beta-alanine + CO2. It functions in the pathway cofactor biosynthesis; (R)-pantothenate biosynthesis; beta-alanine from L-aspartate: step 1/1. Functionally, catalyzes the pyruvoyl-dependent decarboxylation of aspartate to produce beta-alanine. In Neisseria gonorrhoeae (strain ATCC 700825 / FA 1090), this protein is Aspartate 1-decarboxylase.